Here is a 750-residue protein sequence, read N- to C-terminus: MLPAFSPIFRRLLPAVTFERLLRFWRTLAQQTGDGVQCFVGDLPSSLKPPPGPSVLEAEVDHRFALLVSPGQWALLEGEQISPHHYAVSITFAQGIIEDFIQKQNLPVVAEAMPHRPETPSGPTIAEQLTLGLLEILNSDSTSFSPEPSLQDSLQASQVKLLSQVIAQIRQSLDLSEILNNAVTAVQKFLFVDRLVIYQFHYSQPSLTPLEENQIPAPRPRQQYGEVTYEARRSPEIDTMLGIMTENDCFSQVFSYEQKYLKGAVVAVSDIENHYSSSYCLVGLLQRYQVRAKLVAPIIVEGQLWGLLIAHQCHHPRQWLDSEKNFLGQIGEHLAVAIVQSLLYSEVQKQKNNFEKRVIERTKELRDTLMAAQAANLLKSQFINNISHELRTPLTSIIGLSATLLRWFDHPASLPPAKQQYYLLNIQENGKKLLDQINSIIQLSQLESGQTALNCQSFSLHTLAQTVIHSLLGVAIKQQINLELDYQINVGQDQFCADQERLDQILTQLLNNALKFTPAEGTVILRIWKESNQAIFQVEDTGIGINEQQLPVLFEAFKVAGDSYTSFYETGGVGLALTKQLVELHGGYIEVESSPGQGTIFTTVIPQQNFPPTTKGQVQDKLDAAMPFNSSVIVIEQDEEIATLICELLTVANYQVIWLIDTTNALQQVELLQPGLIIVDGDFVDVTEVTRGIKKSRRISKVTVFLLSESLSSAEWQALSQKGIDDYLLKPLQPELLLQRVQSIQQEPLR.

An N-terminal domain region spans residues 1-173; that stretch reads MLPAFSPIFR…QVIAQIRQSL (173 aa). The segment at 174 to 333 is GAF domain; it reads DLSEILNNAV…KNFLGQIGEH (160 aa). The Histidine kinase domain maps to 385 to 609; that stretch reads NISHELRTPL…IFTTVIPQQN (225 aa). At histidine 388 the chain carries Phosphohistidine; by autocatalysis. Residues 604–750 form a psR domain, bind KaiB(fs) region; it reads VIPQQNFPPT…VQSIQQEPLR (147 aa). A Response regulatory domain is found at 631-745; sequence SVIVIEQDEE…LLLQRVQSIQ (115 aa). Aspartate 680 carries the post-translational modification 4-aspartylphosphate.

The protein in the N-terminal section; belongs to the phytochrome family. As to quaternary structure, homodimer. Part of the circadian clock (KaiA, KaiB, KaiC, CikA, RpaA, SasA), the composition of which varies during the circadian cycle. KaiA and CikA compete for binding to KaiB(fs). Interacts with RpaA.

The catalysed reaction is ATP + protein L-histidine = ADP + protein N-phospho-L-histidine.. Its function is as follows. Functions in an input pathway to the Kai circadian clock. Senses oxidized quinones via its C-terminal pseudo-receiver domain, providing a link between cell metabolism and the clock. Affects the ratio of phosphorylated to unphosphorylated KaiC, binds quinones via its pseudo-receptor domain. Quinone-binding destabilizes the protein rapidly. Autophosphorylates, does not transfer the phosphate to its pseudo-receiver (PsR) domain. May play a role in cell division. In terms of biological role, also functions in a two-component CikA/RpaA output pathway from the circadian clock, negatively regulating kaiBC expression independently of labA and of sasA. One of three clock output pathways. Dephosphorylates phospho-RpaA, enhanced by KaiB and KaiC, has only modest kinase activity on RpaA. The sequence is that of Circadian input-output histidine kinase CikA from Synechocystis sp. (strain ATCC 27184 / PCC 6803 / Kazusa).